The following is a 291-amino-acid chain: Beta-lactamase CTX-M-25 (291 aa).

Positions Met-1–Ala-30 are cleaved as a signal peptide. Ser-73 acts as the Nucleophile; acyl-ester intermediate in catalysis. Positions 76, 133, 169, and 240 each coordinate a beta-lactam.

The protein belongs to the class-A beta-lactamase family. As to quaternary structure, monomer.

The protein localises to the secreted. The enzyme catalyses a beta-lactam + H2O = a substituted beta-amino acid. Its activity is regulated as follows. Inhibited by the beta-lactamase-blocking agents clavulanic acid and tazobactam; in the DH10B strain. Extended-spectrum beta-lactamase (ESBL) which confers resistance to penicillins, as well as first, second and third-generation cephalosporins. Has cefotaxime-hydrolyzing activity. Inactive against cephalosporin antibiotic, cefoxitin, and the carbapenem, imipenem. The sequence is that of Beta-lactamase CTX-M-25 from Escherichia coli.